We begin with the raw amino-acid sequence, 429 residues long: Histidine--tRNA ligase (429 aa).

This sequence belongs to the class-II aminoacyl-tRNA synthetase family. As to quaternary structure, homodimer.

Its subcellular location is the cytoplasm. It carries out the reaction tRNA(His) + L-histidine + ATP = L-histidyl-tRNA(His) + AMP + diphosphate + H(+). The protein is Histidine--tRNA ligase of Oceanobacillus iheyensis (strain DSM 14371 / CIP 107618 / JCM 11309 / KCTC 3954 / HTE831).